Here is a 211-residue protein sequence, read N- to C-terminus: Thiamine-phosphate synthase (211 aa).

Residues 38–42 and Asn70 each bind 4-amino-2-methyl-5-(diphosphooxymethyl)pyrimidine; that span reads QLREK. Positions 71 and 90 each coordinate Mg(2+). Ser109 contributes to the 4-amino-2-methyl-5-(diphosphooxymethyl)pyrimidine binding site. 135 to 137 is a binding site for 2-[(2R,5Z)-2-carboxy-4-methylthiazol-5(2H)-ylidene]ethyl phosphate; the sequence is TST. Lys138 is a binding site for 4-amino-2-methyl-5-(diphosphooxymethyl)pyrimidine. 2-[(2R,5Z)-2-carboxy-4-methylthiazol-5(2H)-ylidene]ethyl phosphate is bound by residues Gly165 and 185-186; that span reads IS.

Belongs to the thiamine-phosphate synthase family. The cofactor is Mg(2+).

The enzyme catalyses 2-[(2R,5Z)-2-carboxy-4-methylthiazol-5(2H)-ylidene]ethyl phosphate + 4-amino-2-methyl-5-(diphosphooxymethyl)pyrimidine + 2 H(+) = thiamine phosphate + CO2 + diphosphate. It carries out the reaction 2-(2-carboxy-4-methylthiazol-5-yl)ethyl phosphate + 4-amino-2-methyl-5-(diphosphooxymethyl)pyrimidine + 2 H(+) = thiamine phosphate + CO2 + diphosphate. It catalyses the reaction 4-methyl-5-(2-phosphooxyethyl)-thiazole + 4-amino-2-methyl-5-(diphosphooxymethyl)pyrimidine + H(+) = thiamine phosphate + diphosphate. The protein operates within cofactor biosynthesis; thiamine diphosphate biosynthesis; thiamine phosphate from 4-amino-2-methyl-5-diphosphomethylpyrimidine and 4-methyl-5-(2-phosphoethyl)-thiazole: step 1/1. Its function is as follows. Condenses 4-methyl-5-(beta-hydroxyethyl)thiazole monophosphate (THZ-P) and 2-methyl-4-amino-5-hydroxymethyl pyrimidine pyrophosphate (HMP-PP) to form thiamine monophosphate (TMP). This Clostridium acetobutylicum (strain ATCC 824 / DSM 792 / JCM 1419 / IAM 19013 / LMG 5710 / NBRC 13948 / NRRL B-527 / VKM B-1787 / 2291 / W) protein is Thiamine-phosphate synthase.